The sequence spans 239 residues: Glucosamine-6-phosphate deaminase (239 aa).

D62 functions as the Proton acceptor; for enolization step in the catalytic mechanism. N128 (for ring-opening step) is an active-site residue. H130 functions as the Proton acceptor; for ring-opening step in the catalytic mechanism. The For ring-opening step role is filled by E135.

Belongs to the glucosamine/galactosamine-6-phosphate isomerase family. NagB subfamily.

The catalysed reaction is alpha-D-glucosamine 6-phosphate + H2O = beta-D-fructose 6-phosphate + NH4(+). It participates in amino-sugar metabolism; N-acetylneuraminate degradation; D-fructose 6-phosphate from N-acetylneuraminate: step 5/5. Catalyzes the reversible isomerization-deamination of glucosamine 6-phosphate (GlcN6P) to form fructose 6-phosphate (Fru6P) and ammonium ion. The chain is Glucosamine-6-phosphate deaminase from Lactobacillus acidophilus (strain ATCC 700396 / NCK56 / N2 / NCFM).